Reading from the N-terminus, the 143-residue chain is Alpha-S2-casein-like B (143 aa).

Positions 1 to 15 (MKFIILTCLLAVALA) are cleaved as a signal peptide.

Belongs to the alpha-casein family. In terms of tissue distribution, mammary gland specific. Secreted in milk.

The protein localises to the secreted. Its function is as follows. Important role in the capacity of milk to transport calcium phosphate. The protein is Alpha-S2-casein-like B (Csn1s2b) of Mus musculus (Mouse).